The sequence spans 265 residues: Cytochrome c oxidase subunit 3 (265 aa).

6 consecutive transmembrane segments (helical) span residues Gly41–Trp61, Gly85–Phe105, Thr137–Gly157, Ala162–Met182, Phe200–Val220, and Trp245–Ile265.

This sequence belongs to the cytochrome c oxidase subunit 3 family. Component of the cytochrome c oxidase (complex IV, CIV), a multisubunit enzyme composed of a catalytic core of 3 subunits and several supernumerary subunits. The complex exists as a monomer or a dimer and forms supercomplexes (SCs) in the inner mitochondrial membrane with ubiquinol-cytochrome c oxidoreductase (cytochrome b-c1 complex, complex III, CIII).

It is found in the mitochondrion inner membrane. The enzyme catalyses 4 Fe(II)-[cytochrome c] + O2 + 8 H(+)(in) = 4 Fe(III)-[cytochrome c] + 2 H2O + 4 H(+)(out). Its function is as follows. Component of the cytochrome c oxidase, the last enzyme in the mitochondrial electron transport chain which drives oxidative phosphorylation. The respiratory chain contains 3 multisubunit complexes succinate dehydrogenase (complex II, CII), ubiquinol-cytochrome c oxidoreductase (cytochrome b-c1 complex, complex III, CIII) and cytochrome c oxidase (complex IV, CIV), that cooperate to transfer electrons derived from NADH and succinate to molecular oxygen, creating an electrochemical gradient over the inner membrane that drives transmembrane transport and the ATP synthase. Cytochrome c oxidase is the component of the respiratory chain that catalyzes the reduction of oxygen to water. Electrons originating from reduced cytochrome c in the intermembrane space (IMS) are transferred via the dinuclear copper A center (CU(A)) of subunit 2 and heme A of subunit 1 to the active site in subunit 1, a binuclear center (BNC) formed by heme A3 and copper B (CU(B)). The BNC reduces molecular oxygen to 2 water molecules using 4 electrons from cytochrome c in the IMS and 4 protons from the mitochondrial matrix. The chain is Cytochrome c oxidase subunit 3 (COX3) from Triticum aestivum (Wheat).